The sequence spans 484 residues: Glycogen synthase 2 (484 aa).

Lys15 is a binding site for ADP-alpha-D-glucose.

The protein belongs to the glycosyltransferase 1 family. Bacterial/plant glycogen synthase subfamily.

It carries out the reaction [(1-&gt;4)-alpha-D-glucosyl](n) + ADP-alpha-D-glucose = [(1-&gt;4)-alpha-D-glucosyl](n+1) + ADP + H(+). It functions in the pathway glycan biosynthesis; glycogen biosynthesis. Functionally, synthesizes alpha-1,4-glucan chains using ADP-glucose. This chain is Glycogen synthase 2, found in Geobacter metallireducens (strain ATCC 53774 / DSM 7210 / GS-15).